Consider the following 969-residue polypeptide: RNA polymerase-associated protein RapA (969 aa).

The Helicase ATP-binding domain maps to 164 to 334; that stretch reads EVGRRHAPRV…FARLRLLDPD (171 aa). 177–184 contributes to the ATP binding site; it reads DEVGLGKT. The DEAH box signature appears at 280–283; that stretch reads DEAH. In terms of domain architecture, Helicase C-terminal spans 492–646; sequence RVNWLLEKVK…TCPTGRAVYD (155 aa).

The protein belongs to the SNF2/RAD54 helicase family. RapA subfamily. As to quaternary structure, interacts with the RNAP. Has a higher affinity for the core RNAP than for the holoenzyme. Its ATPase activity is stimulated by binding to RNAP.

In terms of biological role, transcription regulator that activates transcription by stimulating RNA polymerase (RNAP) recycling in case of stress conditions such as supercoiled DNA or high salt concentrations. Probably acts by releasing the RNAP, when it is trapped or immobilized on tightly supercoiled DNA. Does not activate transcription on linear DNA. Probably not involved in DNA repair. The protein is RNA polymerase-associated protein RapA of Vibrio campbellii (strain ATCC BAA-1116).